The sequence spans 2289 residues: Protein Ycf2 (2289 aa).

1643-1650 (GSIGTGRS) is a binding site for ATP.

The protein belongs to the Ycf2 family.

The protein localises to the plastid. It localises to the chloroplast stroma. Probable ATPase of unknown function. Its presence in a non-photosynthetic plant (Epifagus virginiana) and experiments in tobacco indicate that it has an essential function which is probably not related to photosynthesis. The sequence is that of Protein Ycf2 from Aethionema grandiflorum (Persian stone-cress).